We begin with the raw amino-acid sequence, 54 residues long: Relaxin (54 aa).

Glutamine 1 bears the Pyrrolidone carboxylic acid mark. 3 cysteine pairs are disulfide-bonded: cysteine 10–cysteine 41, cysteine 22–cysteine 54, and cysteine 40–cysteine 45.

It belongs to the insulin family. As to quaternary structure, heterodimer of a B chain and an A chain linked by two disulfide bonds.

Its subcellular location is the secreted. In terms of biological role, relaxin is an ovarian hormone that acts with estrogen to produce dilatation of the birth canal in many mammals. The protein is Relaxin of Balaenoptera acutorostrata (Common minke whale).